The primary structure comprises 503 residues: Lysine--tRNA ligase (503 aa).

Mg(2+)-binding residues include E414 and E421.

The protein belongs to the class-II aminoacyl-tRNA synthetase family. In terms of assembly, homodimer. Mg(2+) serves as cofactor.

It localises to the cytoplasm. The catalysed reaction is tRNA(Lys) + L-lysine + ATP = L-lysyl-tRNA(Lys) + AMP + diphosphate. This Neisseria meningitidis serogroup A / serotype 4A (strain DSM 15465 / Z2491) protein is Lysine--tRNA ligase.